The sequence spans 101 residues: Large ribosomal subunit protein uL23 (101 aa).

This sequence belongs to the universal ribosomal protein uL23 family. As to quaternary structure, part of the 50S ribosomal subunit. Contacts protein L29, and trigger factor when it is bound to the ribosome.

One of the early assembly proteins it binds 23S rRNA. One of the proteins that surrounds the polypeptide exit tunnel on the outside of the ribosome. Forms the main docking site for trigger factor binding to the ribosome. The sequence is that of Large ribosomal subunit protein uL23 from Nocardia farcinica (strain IFM 10152).